Reading from the N-terminus, the 356-residue chain is 3-dehydroquinate synthase (356 aa).

NAD(+) contacts are provided by residues Gly106 to Asp110, Thr130 to Thr131, Lys143, and Lys152. Residues Glu185, His248, and His265 each coordinate Zn(2+).

It belongs to the sugar phosphate cyclases superfamily. Dehydroquinate synthase family. NAD(+) is required as a cofactor. Requires Co(2+) as cofactor. It depends on Zn(2+) as a cofactor.

It is found in the cytoplasm. It catalyses the reaction 7-phospho-2-dehydro-3-deoxy-D-arabino-heptonate = 3-dehydroquinate + phosphate. The protein operates within metabolic intermediate biosynthesis; chorismate biosynthesis; chorismate from D-erythrose 4-phosphate and phosphoenolpyruvate: step 2/7. Functionally, catalyzes the conversion of 3-deoxy-D-arabino-heptulosonate 7-phosphate (DAHP) to dehydroquinate (DHQ). This Caldanaerobacter subterraneus subsp. tengcongensis (strain DSM 15242 / JCM 11007 / NBRC 100824 / MB4) (Thermoanaerobacter tengcongensis) protein is 3-dehydroquinate synthase.